The primary structure comprises 342 residues: NADH-quinone oxidoreductase subunit H 1 (342 aa).

A run of 8 helical transmembrane segments spans residues 7–27 (FLLE…VIAM), 78–98 (ALFI…GAVI), 120–140 (IGVL…MIGG), 166–186 (MGLS…GEIV), 193–213 (WWNI…SFAE), 245–265 (LFAE…FYFG), 284–304 (ILGT…FMWV), and 322–342 (KIMI…ILLF).

Belongs to the complex I subunit 1 family. In terms of assembly, NDH-1 is composed of 14 different subunits. Subunits NuoA, H, J, K, L, M, N constitute the membrane sector of the complex.

The protein resides in the cell inner membrane. The enzyme catalyses a quinone + NADH + 5 H(+)(in) = a quinol + NAD(+) + 4 H(+)(out). Functionally, NDH-1 shuttles electrons from NADH, via FMN and iron-sulfur (Fe-S) centers, to quinones in the respiratory chain. The immediate electron acceptor for the enzyme in this species is believed to be ubiquinone. Couples the redox reaction to proton translocation (for every two electrons transferred, four hydrogen ions are translocated across the cytoplasmic membrane), and thus conserves the redox energy in a proton gradient. This subunit may bind ubiquinone. The protein is NADH-quinone oxidoreductase subunit H 1 of Cytophaga hutchinsonii (strain ATCC 33406 / DSM 1761 / CIP 103989 / NBRC 15051 / NCIMB 9469 / D465).